A 124-amino-acid polypeptide reads, in one-letter code: Small ribosomal subunit protein bS16 (124 aa).

Residues 88-124 are disordered; it reads VPEQTKQAQPKAKAQERLREAEEKARAAAEAAASAEG. Residues 100–114 show a composition bias toward basic and acidic residues; that stretch reads KAQERLREAEEKARA. The segment covering 115–124 has biased composition (low complexity); the sequence is AAEAAASAEG.

This sequence belongs to the bacterial ribosomal protein bS16 family.

This Rhodospirillum rubrum (strain ATCC 11170 / ATH 1.1.1 / DSM 467 / LMG 4362 / NCIMB 8255 / S1) protein is Small ribosomal subunit protein bS16.